A 742-amino-acid polypeptide reads, in one-letter code: Phosphoribosylformylglycinamidine synthase subunit PurL (742 aa).

Histidine 54 is an active-site residue. Positions 57 and 96 each coordinate ATP. Glutamate 98 serves as a coordination point for Mg(2+). Substrate is bound by residues 99 to 102 (SHNH) and arginine 121. Histidine 100 serves as the catalytic Proton acceptor. Aspartate 122 serves as a coordination point for Mg(2+). Glutamine 245 provides a ligand contact to substrate. Aspartate 273 is a Mg(2+) binding site. 317–319 (ESQ) contacts substrate. Positions 500 and 537 each coordinate ATP. A Mg(2+)-binding site is contributed by asparagine 538. Substrate is bound at residue serine 540.

Belongs to the FGAMS family. In terms of assembly, monomer. Part of the FGAM synthase complex composed of 1 PurL, 1 PurQ and 2 PurS subunits.

The protein resides in the cytoplasm. It carries out the reaction N(2)-formyl-N(1)-(5-phospho-beta-D-ribosyl)glycinamide + L-glutamine + ATP + H2O = 2-formamido-N(1)-(5-O-phospho-beta-D-ribosyl)acetamidine + L-glutamate + ADP + phosphate + H(+). The protein operates within purine metabolism; IMP biosynthesis via de novo pathway; 5-amino-1-(5-phospho-D-ribosyl)imidazole from N(2)-formyl-N(1)-(5-phospho-D-ribosyl)glycinamide: step 1/2. In terms of biological role, part of the phosphoribosylformylglycinamidine synthase complex involved in the purines biosynthetic pathway. Catalyzes the ATP-dependent conversion of formylglycinamide ribonucleotide (FGAR) and glutamine to yield formylglycinamidine ribonucleotide (FGAM) and glutamate. The FGAM synthase complex is composed of three subunits. PurQ produces an ammonia molecule by converting glutamine to glutamate. PurL transfers the ammonia molecule to FGAR to form FGAM in an ATP-dependent manner. PurS interacts with PurQ and PurL and is thought to assist in the transfer of the ammonia molecule from PurQ to PurL. The polypeptide is Phosphoribosylformylglycinamidine synthase subunit PurL (Oceanobacillus iheyensis (strain DSM 14371 / CIP 107618 / JCM 11309 / KCTC 3954 / HTE831)).